Here is a 1493-residue protein sequence, read N- to C-terminus: DNA excision repair protein ERCC-6 (1493 aa).

The disordered stretch occupies residues 1–39; that stretch reads MPNEGIPHSSQTQEQDCLQSQPVSNNEEMAIKQESGGDG. The interval 1-510 is N-terminal domain; essential for its chromatin remodeling activity; the sequence is MPNEGIPHSS…GFLFKKLFKY (510 aa). Polar residues predominate over residues 8–27; the sequence is HSSQTQEQDCLQSQPVSNNE. Phosphoserine; by ATM is present on serine 10. Serine 158 carries the post-translational modification Phosphoserine; by CDK2. The residue at position 170 (lysine 170) is an N6-methylated lysine; by EHMT2. Lysine 205 participates in a covalent cross-link: Glycyl lysine isopeptide (Lys-Gly) (interchain with G-Cter in SUMO3). Lysine 255 is covalently cross-linked (Glycyl lysine isopeptide (Lys-Gly) (interchain with G-Cter in SUMO2)). 2 disordered regions span residues 287–323 and 344–453; these read KQGC…VLSK and GKVG…GRYR. An N6-methylated lysine; by EHMT2 modification is found at lysine 297. A compositionally biased stretch (basic and acidic residues) spans 353–363; the sequence is RPWESDMRPEA. The span at 364 to 392 shows a compositional bias: acidic residues; sequence EGDSEGEESEYFPTEEEEEEEDDEVEGAE. Phosphoserine occurs at positions 429 and 430. Position 448 is an N6-methylated lysine; by EHMT2 (lysine 448). Residues serine 486 and serine 489 each carry the phosphoserine modification. Residues 519-695 enclose the Helicase ATP-binding domain; it reads WELHCQQAGG…WSLFDFIFPG (177 aa). Position 532–539 (532–539) interacts with ATP; it reads DEMGLGKT. Residues 646–649 carry the DEAH box motif; that stretch reads DEGH. A Helicase C-terminal domain is found at 843 to 1002; the sequence is VVESLLKIWH…RRFFKSNDLY (160 aa). Disordered regions lie at residues 1042 to 1147, 1181 to 1247, and 1318 to 1384; these read PAFG…DESI, HKSK…EQSN, and RGIS…SGPL. N6-methylated lysine; by EHMT2 is present on lysine 1054. The segment covering 1123–1141 has biased composition (polar residues); the sequence is ISGNGECSNSSGTGKTSMP. Serine 1142 carries the phosphoserine modification. Residues 1200-1210 are compositionally biased toward basic residues; it reads LRPKQKPKNSK. 2 stretches are compositionally biased toward basic and acidic residues: residues 1211–1221 and 1232–1247; these read HCRDAKFEGTR and QKQD…EQSN. The segment covering 1327-1336 has biased composition (basic residues); the sequence is KKSRFGKKRN. Positions 1337-1351 are enriched in polar residues; it reads SNFSVQHPSSTSPTE. The residue at position 1348 (serine 1348) is a Phosphoserine. The span at 1352–1376 shows a compositional bias: basic and acidic residues; sequence KCQDGIMKKEGKDNVPEHFSGRAED. The short motif at 1386 to 1398 is the CSA-interacting motif (CIM) element; it reads SSSLLAKMRARNH. The segment at 1400–1428 is ubiquitin-binding domain (UBD); the sequence is ILPERLESESGHLQEASALLPTTEHDDLL. Residues 1429 to 1493 are winged-helix domain (WHD); sequence VEMRNFIAFQ…GIWKLKPEYC (65 aa). Residues 1446 to 1493 are essential for its interaction with RNA polymerase II, transcription-coupled nucleotide excision repair activity, association with chromatin after UV irradiation and for mediating the UV-induced translocation of ERRC8 to the nuclear matrix; the sequence is STREILQEFESKLSASQSCVFRELLRNLCTFHRTSGGEGIWKLKPEYC.

The protein belongs to the SNF2/RAD54 helicase family. In terms of assembly, homodimer. Binds DNA. Interacts with ERCC8. Interacts with RNA polymerase II; interaction is enhanced by UV irradiation. Component of the B-WICH complex, at least composed of SMARCA5/SNF2H, BAZ1B/WSTF, SF3B1, DEK, MYO1C, ERCC6, MYBBP1A and DDX21. Interacts with KIAA1530/UVSSA. Interacts with ELOA and CUL5; the interaction is induced by DNA damaging agents or by inhibitors of RNA polymerase II elongation. Interacts (via WHD region) with RIF1. Interacts with SMARCC2/BAF170, SMARCB1/BAF47 and the neuron-specific chromatin remodeling complex (nBAF complex). Interacts with ERCC5/XPG (via C-terminus); the interaction stimulates ERCC6/CSB binding to the DNA repair bubble and ERCC6/CSB ATPase activity. May form a complex composed of RNA polymerase II, ERCC6/CSB and ERCC5/XPG which associates with the DNA repair bubble during transcription-coupled nucleotide excision repair. Interacts with CAND1, CSTF1, DDX3X, DDX5, DDX17, DDX23, DHX36, HDAC1, HNRNPU, MTA2, PRPF3, PSMD3, RBBP4, SFPQ, SMARCA1, SMARCA2, TOP1, USP7, XRCC5, COPS3, COPS4, COPS6, DDX1, DDX41, GATAD2A, GATAD2B, PRPF4, PSMC5, SF3B2, CTR9, NONO, PSMD12 and TOP2A. In terms of processing, phosphorylated in a cell cycle-dependent manner at Ser-158 by cyclin A-CDK2 and at Ser-10 by ATM in response to DNA damage. Phosphorylation at these two sites promotes the intramolecular interaction of the N-terminal domain with the helicase ATP-binding domain, thereby probably releasing the inhibitory effect of the N-terminal domain on its ATPase activity. Phosphorylation is essential for its chromatin remodeling activity. Ubiquitinated at the C-terminus. Ubiquitination by the CSA complex leads to ERCC6 proteasomal degradation in a UV-dependent manner. Stabilized following interaction with KIAA1530/UVSSA, which promotes recruitment of deubiquitinating enzyme USP7, leading to deubiquitination of ERCC6 thereby preventing UV-induced degradation of ERCC6 by the proteasome. Post-translationally, sumoylation at Lys-205 in an UV-radiation-dependent manner is essential for its transcription-coupled nucleotide excision repair activity.

Its subcellular location is the nucleus. It is found in the chromosome. It catalyses the reaction ATP + H2O = ADP + phosphate + H(+). Its function is as follows. Essential factor involved in transcription-coupled nucleotide excision repair (TC-NER), a process during which RNA polymerase II-blocking lesions are rapidly removed from the transcribed strand of active genes. Plays a central role in the initiation of the TC-NER process: specifically recognizes and binds RNA polymerase II stalled at a lesion, and mediates recruitment of ERCC8/CSA, initiating DNA damage excision by TFIIH recruitment. Upon DNA-binding, it locally modifies DNA conformation by wrapping the DNA around itself, thereby modifying the interface between stalled RNA polymerase II and DNA. Acts as a chromatin remodeler at DSBs; DNA-dependent ATPase-dependent activity is essential for this function. Plays an important role in regulating the choice of the DNA double-strand breaks (DSBs) repair pathway and G2/M checkpoint activation; DNA-dependent ATPase activity is essential for this function. Regulates the DNA repair pathway choice by inhibiting non-homologous end joining (NHEJ), thereby promoting the homologous recombination (HR)-mediated repair of DSBs during the S/G2 phases of the cell cycle. Mediates the activation of the ATM- and CHEK2-dependent DNA damage responses thus preventing premature entry of cells into mitosis following the induction of DNA DSBs. Remodels chromatin by evicting histones from chromatin flanking DSBs, limiting RIF1 accumulation at DSBs thereby promoting BRCA1-mediated HR. Required for stable recruitment of ELOA and CUL5 to DNA damage sites. Also involved in UV-induced translocation of ERCC8 to the nuclear matrix. Essential for neuronal differentiation and neuritogenesis; regulates transcription and chromatin remodeling activities required during neurogenesis. The protein is DNA excision repair protein ERCC-6 of Homo sapiens (Human).